Reading from the N-terminus, the 354-residue chain is Dye-decolorizing peroxidase (354 aa).

Residue Asp165 is the Proton acceptor of the active site. His238 lines the heme pocket. The targeting peptide stretch occupies residues 312 to 335 (GLFFSPTVDFLDDPPPLPAPGTPA). Over residues 324-337 (DPPPLPAPGTPAAP) the composition is skewed to pro residues. The interval 324–354 (DPPPLPAPGTPAAPPARNGSLSIGSLKGTTR) is disordered. Polar residues predominate over residues 342–354 (GSLSIGSLKGTTR).

Belongs to the DyP-type peroxidase family. Found in a complex with type 1 encapsulin, strongly suggesting it is found in a type 1 encapsulin nanocompartment. Homotetramer, presumably also in the type 1 encapsulin nanocompartment. Heme b is required as a cofactor.

It localises to the encapsulin nanocompartment. The protein localises to the cell membrane. It carries out the reaction 2 a phenolic donor + H2O2 = 2 a phenolic radical donor + 2 H2O. Cargo protein of a type 1 encapsulin nanocompartment. A heme-dependent peroxidase. This cargo-loaded encapsulin nanocompartment is probably involved in protection against oxidative damage. The sequence is that of Dye-decolorizing peroxidase from Mycolicibacterium paratuberculosis (strain ATCC BAA-968 / K-10) (Mycobacterium paratuberculosis).